Here is a 408-residue protein sequence, read N- to C-terminus: Peptidase T (408 aa).

H78 is a binding site for Zn(2+). D80 is an active-site residue. D140 contributes to the Zn(2+) binding site. Residue E173 is the Proton acceptor of the active site. Zn(2+) contacts are provided by E174, D196, and H379.

It belongs to the peptidase M20B family. Requires Zn(2+) as cofactor.

The protein localises to the cytoplasm. It carries out the reaction Release of the N-terminal residue from a tripeptide.. In terms of biological role, cleaves the N-terminal amino acid of tripeptides. The chain is Peptidase T from Escherichia coli (strain K12 / MC4100 / BW2952).